Reading from the N-terminus, the 410-residue chain is 3-phosphoshikimate 1-carboxyvinyltransferase (410 aa).

Positions 27, 28, and 32 each coordinate 3-phosphoshikimate. Lysine 27 is a phosphoenolpyruvate binding site. Glycine 91 and arginine 119 together coordinate phosphoenolpyruvate. Positions 161, 162, 163, 297, 319, and 323 each coordinate 3-phosphoshikimate. Glutamine 163 is a binding site for phosphoenolpyruvate. The active-site Proton acceptor is the aspartate 297. Residues arginine 327, arginine 368, and lysine 394 each contribute to the phosphoenolpyruvate site.

This sequence belongs to the EPSP synthase family. Monomer.

The protein localises to the cytoplasm. The catalysed reaction is 3-phosphoshikimate + phosphoenolpyruvate = 5-O-(1-carboxyvinyl)-3-phosphoshikimate + phosphate. It participates in metabolic intermediate biosynthesis; chorismate biosynthesis. Functionally, catalyzes the transfer of the enolpyruvyl moiety of phosphoenolpyruvate (PEP) to the 5-hydroxyl of shikimate-3-phosphate (S3P) to produce enolpyruvyl shikimate-3-phosphate and inorganic phosphate. This chain is 3-phosphoshikimate 1-carboxyvinyltransferase, found in Pyrococcus abyssi (strain GE5 / Orsay).